A 368-amino-acid chain; its full sequence is Peptide chain release factor 2 (368 aa).

Position 250 is an N5-methylglutamine (Q250).

It belongs to the prokaryotic/mitochondrial release factor family. Methylated by PrmC. Methylation increases the termination efficiency of RF2.

It localises to the cytoplasm. Its function is as follows. Peptide chain release factor 2 directs the termination of translation in response to the peptide chain termination codons UGA and UAA. The polypeptide is Peptide chain release factor 2 (Mycolicibacterium smegmatis (strain ATCC 700084 / mc(2)155) (Mycobacterium smegmatis)).